The chain runs to 177 residues: MLDAFSRVISNADAKAAYVGGSDLQALRTFISDGNKRLDAVNYIVSNSSCIVSDAISGMICENPGLITPGGNCYTNRRMAACLRDGEIILRYISYALLAGDSSVLEDRCLNGLKETYIALGVPTNSTVRAVSIMKAAVGAFISNTASQRKGEVIEGDCSALAAEIASYCDRISAAVS.

(2R,3E)-phycoerythrobilin-binding residues include N35 and D39. Phycourobilin contacts are provided by C50, D54, and C61. (2R,3E)-phycoerythrobilin is bound by residues N72, 77 to 78 (RR), C82, and 84 to 85 (RD). An N4-methylasparagine modification is found at N72. A phycourobilin-binding site is contributed by 147–148 (SQ). The (2R,3E)-phycoerythrobilin site is built by I154 and C158.

Belongs to the phycobiliprotein family. Heterododecamer of 6 alpha and 6 beta chains. The basic functional unit of phycobiliproteins is a ring-shaped hexamer formed from two back-to-back trimers contacting via the alpha chain subunits. The trimers are composed of alpha/beta subunit heterodimers arranged around a three-fold axis of symmetry. The phycoerythrins also contain a gamma subunit which is located in the center of the hexamer. Contains two covalently linked phycoerythrobilin chromophores and one covalently linked phycourobilin chromophore.

It localises to the plastid. The protein resides in the chloroplast thylakoid membrane. Functionally, light-harvesting photosynthetic tetrapyrrole chromophore-protein from the phycobiliprotein complex. This Agarophyton chilense (Red seaweed) protein is R-phycoerythrin beta chain (rpeB).